The primary structure comprises 217 residues: Adenylate kinase (217 aa).

10–15 (GAGKGT) is an ATP binding site. Residues 30 to 59 (STGDMFRAAIKEGTELGLQAKSFMDQGALV) form an NMP region. AMP-binding positions include Thr31, Arg36, 57 to 59 (ALV), 85 to 88 (GFPR), and Gln92. An LID region spans residues 126-163 (GRRICKTCGASYHLIFNPPAEEGKCDKDGGELYTRADD). Residue Arg127 participates in ATP binding. Zn(2+) is bound by residues Cys130 and Cys133. 136 to 137 (SY) serves as a coordination point for ATP. Residues Cys150 and Asp153 each contribute to the Zn(2+) site. AMP contacts are provided by Arg160 and Arg171. Gln199 is a binding site for ATP.

This sequence belongs to the adenylate kinase family. Monomer.

The protein localises to the cytoplasm. The catalysed reaction is AMP + ATP = 2 ADP. It participates in purine metabolism; AMP biosynthesis via salvage pathway; AMP from ADP: step 1/1. Functionally, catalyzes the reversible transfer of the terminal phosphate group between ATP and AMP. Plays an important role in cellular energy homeostasis and in adenine nucleotide metabolism. The chain is Adenylate kinase from Lysinibacillus sphaericus (strain C3-41).